A 234-amino-acid polypeptide reads, in one-letter code: Elongation factor Tu (234 aa).

A tr-type G domain is found at 1-125 (KNMITGAAQM…EVDAFIPTPE (125 aa)). Residue 47 to 50 (NKQD) participates in GTP binding.

Belongs to the TRAFAC class translation factor GTPase superfamily. Classic translation factor GTPase family. EF-Tu/EF-1A subfamily. As to quaternary structure, monomer.

The protein localises to the cytoplasm. The catalysed reaction is GTP + H2O = GDP + phosphate + H(+). GTP hydrolase that promotes the GTP-dependent binding of aminoacyl-tRNA to the A-site of ribosomes during protein biosynthesis. This chain is Elongation factor Tu (tufA), found in Prochlorothrix hollandica.